The primary structure comprises 446 residues: Probable beta-1,4-xylosyltransferase IRX9L (446 aa).

The segment at 1 to 26 (MSRRNAGAMQREGSVKDWEEFDPSPS) is disordered. Residues 1 to 85 (MSRRNAGAMQ…SRSKGMSLKR (85 aa)) lie on the Cytoplasmic side of the membrane. The chain crosses the membrane as a helical; Signal-anchor for type II membrane protein span at residues 86 to 106 (AMLQLLVCFMVGIFIGFTPPF). Over 107-446 (SVDLPGKIAS…RNLDAVVPIT (340 aa)) the chain is Lumenal. N-linked (GlcNAc...) asparagine glycosylation is found at Asn185, Asn258, Asn361, and Asn411.

Belongs to the glycosyltransferase 43 family.

Its subcellular location is the golgi apparatus membrane. Its function is as follows. Probable beta-1,4-xylosyltransferase involved in xylan biosynthesis in cell walls. The polypeptide is Probable beta-1,4-xylosyltransferase IRX9L (Oryza sativa subsp. japonica (Rice)).